Here is a 647-residue protein sequence, read N- to C-terminus: tRNA 5-methylaminomethyl-2-thiouridine biosynthesis bifunctional protein MnmC (647 aa).

Residues 1-235 (MSIPPFSQAS…KRDMLCGRFT (235 aa)) are tRNA (mnm(5)s(2)U34)-methyltransferase. Residues 250 to 647 (IGGGIAGTAS…RGLACHPLRR (398 aa)) are FAD-dependent cmnm(5)s(2)U34 oxidoreductase.

In the N-terminal section; belongs to the methyltransferase superfamily. tRNA (mnm(5)s(2)U34)-methyltransferase family. This sequence in the C-terminal section; belongs to the DAO family. It depends on FAD as a cofactor.

Its subcellular location is the cytoplasm. It carries out the reaction 5-aminomethyl-2-thiouridine(34) in tRNA + S-adenosyl-L-methionine = 5-methylaminomethyl-2-thiouridine(34) in tRNA + S-adenosyl-L-homocysteine + H(+). Catalyzes the last two steps in the biosynthesis of 5-methylaminomethyl-2-thiouridine (mnm(5)s(2)U) at the wobble position (U34) in tRNA. Catalyzes the FAD-dependent demodification of cmnm(5)s(2)U34 to nm(5)s(2)U34, followed by the transfer of a methyl group from S-adenosyl-L-methionine to nm(5)s(2)U34, to form mnm(5)s(2)U34. This Methylobacillus flagellatus (strain ATCC 51484 / DSM 6875 / VKM B-1610 / KT) protein is tRNA 5-methylaminomethyl-2-thiouridine biosynthesis bifunctional protein MnmC.